A 684-amino-acid chain; its full sequence is Beta-mannosyltransferase 1 (684 aa).

At 1–28 (MDKFIQSFSHQYLDSSSSLKLTARRKRK) the chain is on the cytoplasmic side. Residues 29–49 (LTILGLFLFSLISLMIIISYS) traverse the membrane as a helical segment. Residues 50-684 (NNNILPGLSG…KFCKIYGETF (635 aa)) are Extracellular-facing. The N-linked (GlcNAc...) asparagine glycan is linked to Asn-297.

This sequence belongs to the BMT family.

It localises to the membrane. Functionally, beta-mannosyltransferase involved in cell wall biosynthesis. Required for addition of the first beta-mannose residue to acid-stable fraction of cell wall phosphopeptidomannan. Plays a key role in reducing host inflammatory response. This chain is Beta-mannosyltransferase 1 (BMT1), found in Candida albicans (strain SC5314 / ATCC MYA-2876) (Yeast).